A 456-amino-acid polypeptide reads, in one-letter code: Bifunctional protein GlmU (456 aa).

The segment at 1 to 229 is pyrophosphorylase; sequence MLNNAMSVVI…LSEVEGVNNR (229 aa). UDP-N-acetyl-alpha-D-glucosamine-binding positions include 11–14, K25, Q76, 81–82, 103–105, G140, E154, N169, and N227; these read LAAG, GT, and YGD. A Mg(2+)-binding site is contributed by D105. A Mg(2+)-binding site is contributed by N227. A linker region spans residues 230–250; the sequence is LQLSRLERVYQSEQAEKLLLA. The N-acetyltransferase stretch occupies residues 251-456; sequence GVMLRDPARF…EGWRRPVKKK (206 aa). The UDP-N-acetyl-alpha-D-glucosamine site is built by R333 and K351. H363 functions as the Proton acceptor in the catalytic mechanism. The UDP-N-acetyl-alpha-D-glucosamine site is built by Y366 and N377. Acetyl-CoA contacts are provided by residues A380, 386 to 387, S405, A423, and R440; that span reads NY.

It in the N-terminal section; belongs to the N-acetylglucosamine-1-phosphate uridyltransferase family. This sequence in the C-terminal section; belongs to the transferase hexapeptide repeat family. In terms of assembly, homotrimer. Mg(2+) is required as a cofactor.

The protein resides in the cytoplasm. It carries out the reaction alpha-D-glucosamine 1-phosphate + acetyl-CoA = N-acetyl-alpha-D-glucosamine 1-phosphate + CoA + H(+). It catalyses the reaction N-acetyl-alpha-D-glucosamine 1-phosphate + UTP + H(+) = UDP-N-acetyl-alpha-D-glucosamine + diphosphate. It participates in nucleotide-sugar biosynthesis; UDP-N-acetyl-alpha-D-glucosamine biosynthesis; N-acetyl-alpha-D-glucosamine 1-phosphate from alpha-D-glucosamine 6-phosphate (route II): step 2/2. It functions in the pathway nucleotide-sugar biosynthesis; UDP-N-acetyl-alpha-D-glucosamine biosynthesis; UDP-N-acetyl-alpha-D-glucosamine from N-acetyl-alpha-D-glucosamine 1-phosphate: step 1/1. The protein operates within bacterial outer membrane biogenesis; LPS lipid A biosynthesis. In terms of biological role, catalyzes the last two sequential reactions in the de novo biosynthetic pathway for UDP-N-acetylglucosamine (UDP-GlcNAc). The C-terminal domain catalyzes the transfer of acetyl group from acetyl coenzyme A to glucosamine-1-phosphate (GlcN-1-P) to produce N-acetylglucosamine-1-phosphate (GlcNAc-1-P), which is converted into UDP-GlcNAc by the transfer of uridine 5-monophosphate (from uridine 5-triphosphate), a reaction catalyzed by the N-terminal domain. The chain is Bifunctional protein GlmU from Shigella boydii serotype 4 (strain Sb227).